The chain runs to 316 residues: Sorting nexin-20 (316 aa).

A disordered region spans residues 1–57 (MASHKHPGSPGWTGPICQDMAGTTPKASAPRPDLPRPGPEDHLEAQGSPSSNSSMTT). Serine 3 carries the post-translational modification Phosphoserine. The segment covering 47–57 (GSPSSNSSMTT) has biased composition (polar residues). Residues 74–191 (VKLLFEIASA…DFLTRPELKE (118 aa)) enclose the PX domain. Residues arginine 116, serine 118, lysine 143, and arginine 157 each contribute to the a 1,2-diacyl-sn-glycero-3-phospho-(1D-myo-inositol-3-phosphate) site.

Belongs to the sorting nexin family. Interacts with SELPLG. Interaction with SELPLG is controversial.

It localises to the early endosome membrane. Its subcellular location is the cell membrane. The protein localises to the cytoplasm. The protein resides in the nucleus. Functionally, may play a role in cellular vesicle trafficking. Has been proposed to function as a sorting protein that targets SELPLG into endosomes, but has no effect on SELPLG internalization from the cell surface, or on SELPLG-mediated cell-cell adhesion. The polypeptide is Sorting nexin-20 (SNX20) (Bos taurus (Bovine)).